We begin with the raw amino-acid sequence, 161 residues long: Transcriptional repressor NrdR (161 aa).

A zinc finger spans residues 3–34 (CPYCGARDARVIDSRELNGGESIRRRRECIAC). An ATP-cone domain is found at 49–139 (LMVVKRDGRR…VYRRFADLED (91 aa)).

The protein belongs to the NrdR family. The cofactor is Zn(2+).

In terms of biological role, negatively regulates transcription of bacterial ribonucleotide reductase nrd genes and operons by binding to NrdR-boxes. The chain is Transcriptional repressor NrdR from Thermomicrobium roseum (strain ATCC 27502 / DSM 5159 / P-2).